We begin with the raw amino-acid sequence, 217 residues long: Insulin-like growth factor 2.S (217 aa).

The first 56 residues, 1 to 56 (MEQLSCKHRSSSVEAEAQLCRQTESRSTQLPRMSVMRHLFLLSITFLVYTLDSAKA), serve as a signal peptide directing secretion. Positions 57–83 (YRATETLCGGELVDTLQFVCGDRGFYF) are b. 3 disulfide bridges follow: C64/C103, C76/C116, and C102/C107. Residues 84–96 (STNNGRSNRRPNR) form a c region. An a region spans residues 97–117 (GIVDVCCFKSCDLELLETYCA). The segment at 118–123 (KPTKNE) is d. Positions 124–217 (RDVSTAPATA…LQQASEPSHN (94 aa)) are cleaved as a propeptide — e peptide.

It belongs to the insulin family.

It localises to the secreted. The insulin-like growth factors, isolated from plasma, are structurally and functionally related to insulin but have a much higher growth-promoting activity. Promotes anterior neural development. Acts as a ligand for integrin which is required for IGF2 signaling. This chain is Insulin-like growth factor 2.S, found in Xenopus laevis (African clawed frog).